The following is a 147-amino-acid chain: Hemoglobin subunit epsilon (147 aa).

Positions 3 to 147 constitute a Globin domain; it reads HFTAEEKSTI…VATALAHKYH (145 aa). Ser-14 and Ser-51 each carry phosphoserine. The heme b site is built by His-64 and His-93.

Belongs to the globin family. In terms of assembly, heterotetramer of two alpha chains and two epsilon chains in early embryonic hemoglobin Gower-2; two zeta chains and two epsilon chains in early embryonic hemoglobin Gower-1. In terms of tissue distribution, red blood cells.

Functionally, the epsilon chain is a beta-type chain of early mammalian embryonic hemoglobin. The protein is Hemoglobin subunit epsilon (HBE1) of Eulemur fulvus fulvus (Brown lemur).